The chain runs to 488 residues: E3 ubiquitin-protein ligase TRIM39 (488 aa).

Residues 29–70 (CSVCLEYLKEPVIIECGHNFCKACITRWWEDLERDFPCPVCR) form an RING-type zinc finger. Residues 102 to 143 (RDESLCSQHHEPLSLFCYEDQEAVCLICAISHTHRPHTVVPM) form a B box-type zinc finger. Zn(2+) contacts are provided by Cys107, His110, Cys129, and His135. Positions 181–250 (ELKRLVESRR…AHLAAEVEGK (70 aa)) form a coiled coil. Interaction with CDKN1A stretches follow at residues 268–307 (KCEK…QLIA) and 359–488 (TSGR…TDWE). The region spanning 289–484 (SNFPRQYFAL…NAAPLTIRPP (196 aa)) is the B30.2/SPRY domain.

This sequence belongs to the TRIM/RBCC family. In terms of assembly, interacts with MOAP1. Interacts with CDKN1A. Post-translationally, autoubiquitinated.

The protein resides in the cytoplasm. The protein localises to the cytosol. It localises to the mitochondrion. It is found in the nucleus. The catalysed reaction is S-ubiquitinyl-[E2 ubiquitin-conjugating enzyme]-L-cysteine + [acceptor protein]-L-lysine = [E2 ubiquitin-conjugating enzyme]-L-cysteine + N(6)-ubiquitinyl-[acceptor protein]-L-lysine.. Its pathway is protein modification; protein ubiquitination. E3 ubiquitin-protein ligase. May facilitate apoptosis by inhibiting APC/C-Cdh1-mediated poly-ubiquitination and subsequent proteasome-mediated degradation of the pro-apoptotic protein MOAP1. Regulates the G1/S transition of the cell cycle and DNA damage-induced G2 arrest by stabilizing CDKN1A/p21. Positively regulates CDKN1A/p21 stability by competing with DTL for CDKN1A/p21 binding, therefore disrupting DCX(DTL) E3 ubiquitin ligase complex-mediated CDKN1A/p21 ubiquitination and degradation. This is E3 ubiquitin-protein ligase TRIM39 (Trim39) from Mus musculus (Mouse).